Here is a 309-residue protein sequence, read N- to C-terminus: Potassium channel subfamily K member 16 (309 aa).

At 1–13 (MPSAGLCSCWGGR) the chain is on the cytoplasmic side. A helical membrane pass occupies residues 14 to 34 (VLPLLLAYVCYLLLGATIFQL). The segment at residues 98–116 (SFFFAGTVVTTIGYGNLAP) is an intramembrane region (pore-forming). Residues Thr-108, Ile-109, Gly-110, and Tyr-111 each contribute to the K(+) site. Positions 108–113 (TIGYGN) are selectivity filter 1. Residues 120-140 (AGQVFCVFYALLGIPLNVIFL) traverse the membrane as a helical segment. Residues 141–165 (NHLGTGLRAHLAAIERWEDRPRRSQ) lie on the Cytoplasmic side of the membrane. The helical transmembrane segment at 166–186 (VLQVLGLALFLTLGTLVILIF) threads the bilayer. Positions 202–221 (GFYFAFITLSTIGFGDYVVG) form an intramembrane region, pore-forming. K(+) contacts are provided by Thr-212, Ile-213, Gly-214, and Phe-215. Positions 212–217 (TIGFGD) are selectivity filter 2. The helical transmembrane segment at 238–258 (IWILLGLAWLALILPLGPLLL) threads the bilayer. At 259–309 (HRCCQLWLLSLRQGCGAKAAPGRRPRRGSTAARGVQVTPQDFPISKKGLGS) the chain is on the cytoplasmic side.

Belongs to the two pore domain potassium channel (TC 1.A.1.8) family. Homodimer; disulfide-linked. Heterodimer with KCNK17 and KCNK5. In terms of tissue distribution, highly expressed in pancreas, in both endocrine (alpha, beta, gamma, delta, and epsilon) and exocrine (acinar and ductal) cells. Expressed in pacreatic beta-cells (at protein level). Expressed in pacreatic delta-cells (at protein level). Not detectable in the other tissues tested.

Its subcellular location is the endoplasmic reticulum membrane. The protein resides in the cell membrane. The protein localises to the mitochondrion inner membrane. The enzyme catalyses K(+)(in) = K(+)(out). The catalysed reaction is Rb(+)(in) = Rb(+)(out). It carries out the reaction Cs(+)(in) = Cs(+)(out). Its activity is regulated as follows. The channel conductance is stimulated by extracellular alkaline pH. Inhibited by Ba(2+) ions, quinine, quinidine, chloroform and halothane. Its function is as follows. K(+) channel that conducts voltage-dependent outward rectifying currents upon membrane depolarization. Voltage sensing is coupled to K(+) electrochemical gradient in an 'ion flux gating' mode where outward but not inward ion flow opens the gate. Homo- and heterodimerizes to form functional channels with distinct regulatory and gating properties. In pancreatic islets, conducts K(+) countercurrents for Ca(2+) release from the endoplasmic reticulum (ER) and regulates the frequency and duration of cytosolic Ca(2+) oscillations coupled to secretion of pancreatic hormones. In pancreatic beta cells, drives ER Ca(2+) efflux, which in turn activates Ca(2+)-dependent plasma membrane K(+) slow currents and cytosolic Ca(2+) influx, overall contributing to synchronous cytosolic Ca(2+) oscillations. Limits glucose-induced cytosolic Ca(2+) oscillations coupled to second-phase INS secretion. Contributes to beta cell adaptation to acute inflammation by maintaining normal cytosolic Ca(2+) levels and INS secretion. May regulate beta cell mitochondrial Ca(2+) levels either indirectly via ER Ca(2+) efflux or directly by hyperpolarizing the mitochondrial membrane potential. Limits mitochondrial Ca(2+) oscillations and ATP production involved in glucose homeostasis upon metabolic stress. In pancreatic delta cells, limits Ca(2+)-induced Ca(2+)-release involved in somatostatin secretion and modulates islet paracrine signaling involved in glucagon secretion. Permeable to other monovalent cations such as Rb(+) and Cs(+). This is Potassium channel subfamily K member 16 from Homo sapiens (Human).